A 28-amino-acid polypeptide reads, in one-letter code: Small integral membrane protein 47 (28 aa).

A helical membrane pass occupies residues 7-24 (VTLAMALFTILTSIYFFN).

The protein resides in the membrane. In Homo sapiens (Human), this protein is Small integral membrane protein 47.